The following is a 495-amino-acid chain: Two-component response regulator-like APRR3 (495 aa).

Residues 65-183 (KVLLVENDDS…ELKNLWQHVW (119 aa)) enclose the Response regulatory domain. Disordered stretches follow at residues 188 to 441 (SSSG…RWAQ) and 465 to 495 (HSRKKLAEQRPHVKGQFIRKRDDHKSGSEDN). Polar residues predominate over residues 206-217 (PESTQGSENDAS). A compositionally biased stretch (low complexity) spans 231-248 (GLSNQDGGSDNGSGTQSS). Residues 256-265 (TKSTSPSNQF) show a composition bias toward polar residues. The segment covering 284–293 (RLKEAEDQKE) has biased composition (basic and acidic residues). Over residues 294–304 (QIGTGSQTGMS) the composition is skewed to polar residues. The segment covering 307-319 (KKAEEPGDLEKNA) has biased composition (basic and acidic residues). Residues 335-350 (NRSSGNSQVESKAPSS) show a composition bias toward polar residues. Residues 349-372 (SSNREDLQSLEQTLKKTREDRDYK) adopt a coiled-coil conformation. The span at 351–378 (NREDLQSLEQTLKKTREDRDYKVGDRSV) shows a compositional bias: basic and acidic residues. Composition is skewed to polar residues over residues 380 to 395 (RHSNLSAFSKYNNGAT) and 420 to 436 (GSSSSSDNPLKQQSSGS). Residues 442-484 (REAALMKFRLKRKERCFEKKVRYHSRKKLAEQRPHVKGQFIRK) form the CCT domain. Over residues 483-495 (RKRDDHKSGSEDN) the composition is skewed to basic and acidic residues.

This sequence belongs to the ARR-like family. As to quaternary structure, interacts with APRR1/TOC1 (via N-terminus). Phosphorylated by WNK1; during the night. Phosphorylation is required for optimal interaction with APRR1/TOC1.

It localises to the nucleus. Controls photoperiodic flowering response. Component of the circadian clock. Controls the degradation of APRR1/TOC1 by the SCF(ZTL) complex. Expression of several members of the ARR-like family is controlled by circadian rhythm. The particular coordinated sequential expression of APRR9, APRR7, APRR5, APRR3 and APPR1 result to circadian waves that may be at the basis of the endogenous circadian clock. This chain is Two-component response regulator-like APRR3 (APRR3), found in Arabidopsis thaliana (Mouse-ear cress).